The chain runs to 167 residues: Effector CFEM8 (167 aa).

The signal sequence occupies residues 1-17 (MQFSIVVMAALASLASA). Positions 18–112 (QSMDGIPTCA…TPAAAAPYPT (95 aa)) constitute a CFEM domain. 4 disulfides stabilise this stretch: C26/C68, C30/C63, C40/C47, and C49/C85. D44 is a binding site for heme. Residues N117 and N135 are each glycosylated (N-linked (GlcNAc...) asparagine). G143 is lipidated: GPI-anchor amidated glycine. Residues 144 to 167 (SAPQNVAGGLAGIFGLVVAAAFAL) constitute a propeptide, removed in mature form.

Belongs to the RBT5 family.

Its subcellular location is the cell membrane. The protein resides in the secreted. It localises to the host nucleus. The protein localises to the host cell membrane. Its function is as follows. Appears to function during host infection, and may play a role in suppressing the host immune response. The chain is Effector CFEM8 from Marssonina brunnea f. sp. multigermtubi (strain MB_m1) (Marssonina leaf spot fungus).